Consider the following 109-residue polypeptide: MHPQLEAERFHSCLDFINALDKCHQKEYYKRIFGLCNNEKDALNKCLKEASLNNKKRAVIESRIKRADVEKRWKKIEEEEYGEDAILKTILDRQYAKKKQESDNDANSK.

The CHCH domain occupies 10–54; the sequence is FHSCLDFINALDKCHQKEYYKRIFGLCNNEKDALNKCLKEASLNN. Short sequence motifs (cx9C motif) lie at residues 13–23 and 36–46; these read CLDFINALDKC and CNNEKDALNKC. 2 disulfide bridges follow: Cys13–Cys46 and Cys23–Cys36.

The protein belongs to the CMC family. As to quaternary structure, interacts with CMC1.

The protein resides in the mitochondrion inner membrane. It is found in the mitochondrion intermembrane space. Its function is as follows. Required for mitochondrial cytochrome c oxidase (COX) assembly and respiration. May be involved in copper trafficking and distribution to mitochondrial COX and SOD1. In Saccharomyces cerevisiae (strain ATCC 204508 / S288c) (Baker's yeast), this protein is COX assembly mitochondrial protein 2 (CMC2).